A 113-amino-acid chain; its full sequence is U11-theraphotoxin-Hhn1h (113 aa).

A signal peptide spans Met1–Ala21. The propeptide occupies Asp22–Arg74. The disordered stretch occupies residues Glu61–Asp83. Disulfide bonds link Cys82–Cys95 and Cys89–Cys110.

Belongs to the neurotoxin 14 (magi-1) family. 01 (HNTX-16) subfamily. Expressed by the venom gland.

It localises to the secreted. Its function is as follows. Probable ion channel inhibitor. This is U11-theraphotoxin-Hhn1h from Cyriopagopus hainanus (Chinese bird spider).